We begin with the raw amino-acid sequence, 470 residues long: Bifunctional protein ArgHA (470 aa).

The argininosuccinate lyase stretch occupies residues 1-470; the sequence is MALWGGRFSQ…TSGISIRAAR (470 aa).

This sequence in the N-terminal section; belongs to the lyase 1 family. Argininosuccinate lyase subfamily. In the C-terminal section; belongs to the acetyltransferase family. ArgA subfamily.

It is found in the cytoplasm. The enzyme catalyses 2-(N(omega)-L-arginino)succinate = fumarate + L-arginine. It carries out the reaction L-glutamate + acetyl-CoA = N-acetyl-L-glutamate + CoA + H(+). Its pathway is amino-acid biosynthesis; L-arginine biosynthesis; N(2)-acetyl-L-ornithine from L-glutamate: step 1/4. The protein operates within amino-acid biosynthesis; L-arginine biosynthesis; L-arginine from L-ornithine and carbamoyl phosphate: step 3/3. This Moritella profunda protein is Bifunctional protein ArgHA (argHA).